A 1774-amino-acid polypeptide reads, in one-letter code: Receptor-mediated endocytosis protein 6 homolog (1774 aa).

The Ras-GAP domain occupies 157 to 396 (ELLLKLLREL…EDVVAILPQQ (240 aa)). 8 disordered regions span residues 444-480 (IPKQ…NNRS), 517-564 (PLAN…PAPT), 661-727 (AAHS…HHHG), 784-811 (ENTL…RNFS), 869-947 (AEID…EDSA), 983-1102 (ESSF…EEQP), 1115-1142 (QEEQ…SMEQ), and 1214-1342 (RAGA…GGRS). 2 stretches are compositionally biased toward low complexity: residues 519–533 (ANGQ…SASN) and 540–557 (SSHS…AAPA). Positions 674-683 (QQERDVHENE) are enriched in basic and acidic residues. Polar residues predominate over residues 688–713 (DMVSANVSGRGTPNISGRDTPSSQVT). Residues 794–809 (RGGDRGDRGDRDRDRN) show a composition bias toward basic and acidic residues. Over residues 887-905 (PGSGGGAGVPEAGGGGGVV) the composition is skewed to gly residues. Basic and acidic residues predominate over residues 929–944 (DPDRERLRNGSERSQE). Residues 1011–1027 (MRRQTSAESSISNQSLN) are compositionally biased toward polar residues. The span at 1038–1047 (LAKHHHHHQH) shows a compositional bias: basic residues. A compositionally biased stretch (basic and acidic residues) spans 1048 to 1060 (RDRDRDRDRDRDH). Basic residues predominate over residues 1061–1076 (REHHHKSAALKKKKHQ). Residues 1077 to 1087 (EHKEHQHRDLI) are compositionally biased toward basic and acidic residues. The segment covering 1091–1101 (DCSEDKDEEEQ) has biased composition (acidic residues). Over residues 1115 to 1125 (QEEQQQQQQQQ) the composition is skewed to low complexity. Positions 1246–1291 (SADKEQQPYRDRERERDRERDRERDRDRERDRDRDRDRDRDREHHS) are enriched in basic and acidic residues. Residues 1310-1335 (SSSSKNNAIAIAAPSSINPNPSPSSA) are compositionally biased toward low complexity. A coiled-coil region spans residues 1516–1546 (RHRQQLLLRSEQLEQLEVRLRSEARSCQRCL). A VPS9 domain is found at 1635–1774 (VSRDTVLSAH…KFIKTMDYLD (140 aa)).

It belongs to the GAPVD1 family.

The protein localises to the membrane. Its function is as follows. Acts both as a GTPase-activating protein (GAP) and a guanine nucleotide exchange factor (GEF), and participates in endocytosis. This Drosophila pseudoobscura pseudoobscura (Fruit fly) protein is Receptor-mediated endocytosis protein 6 homolog.